The following is a 104-amino-acid chain: Zinc finger C2H2 protein ECU02_0310 (104 aa).

A C2H2-type zinc finger spans residues 56–80; the sequence is FYCCECDRHFITEKVLMEHKRSNPH.

Belongs to the ZNF593/BUD20 C2H2-type zinc-finger protein family. Associates with pre-60S ribosomal particles; released from the pre-60S particle very early in the cytoplasm.

The protein localises to the nucleus. It is found in the cytoplasm. Its function is as follows. Involved in pre-60S ribosomal particles maturation by promoting the nuclear export of the 60S ribosome. The polypeptide is Zinc finger C2H2 protein ECU02_0310 (Encephalitozoon cuniculi (strain GB-M1) (Microsporidian parasite)).